Here is a 166-residue protein sequence, read N- to C-terminus: Transcriptional repressor NrdR (166 aa).

The segment at 3–34 (CPFCHFVETDVIDTRKLYEGEVIRRRRRCRAC) is a zinc-finger region. In terms of domain architecture, ATP-cone spans 49-139 (LMVVKKDGTR…VYRAFTDIGK (91 aa)).

The protein belongs to the NrdR family. The cofactor is Zn(2+).

Its function is as follows. Negatively regulates transcription of bacterial ribonucleotide reductase nrd genes and operons by binding to NrdR-boxes. The chain is Transcriptional repressor NrdR from Chloroflexus aurantiacus (strain ATCC 29364 / DSM 637 / Y-400-fl).